We begin with the raw amino-acid sequence, 227 residues long: PKHD-type hydroxylase Bpro_3048 (227 aa).

In terms of domain architecture, Fe2OG dioxygenase spans 78–179 (KIFTPRINRY…RLACFFWVES (102 aa)). Fe cation contacts are provided by His-97, Asp-99, and His-160. Arg-170 serves as a coordination point for 2-oxoglutarate.

Fe(2+) is required as a cofactor. Requires L-ascorbate as cofactor.

The sequence is that of PKHD-type hydroxylase Bpro_3048 from Polaromonas sp. (strain JS666 / ATCC BAA-500).